Reading from the N-terminus, the 92-residue chain is MARSLKKGPFVADHLLKKIESLNAQGEKKVIITWSRASIIVPGMIGHTIAVHNGREHLPVYITDLMVGHKLGEFAPTRTFRGHAKSDKKSRR.

It belongs to the universal ribosomal protein uS19 family.

It is found in the plastid. Its subcellular location is the chloroplast. In terms of biological role, protein S19 forms a complex with S13 that binds strongly to the 16S ribosomal RNA. This chain is Small ribosomal subunit protein uS19c, found in Staurastrum punctulatum (Green alga).